A 126-amino-acid chain; its full sequence is Small ribosomal subunit protein eS6 (126 aa).

It belongs to the eukaryotic ribosomal protein eS6 family.

The sequence is that of Small ribosomal subunit protein eS6 from Methanothermobacter thermautotrophicus (strain ATCC 29096 / DSM 1053 / JCM 10044 / NBRC 100330 / Delta H) (Methanobacterium thermoautotrophicum).